Consider the following 633-residue polypeptide: Probable extracellular metalloproteinase 5 (633 aa).

The N-terminal stretch at 1–20 is a signal peptide; sequence MHGLLLAAAGLLSLPLHVLA. A propeptide spanning residues 21 to 244 is cleaved from the precursor; it reads HPQPSTNLAG…VHNVVDYVSH (224 aa). N-linked (GlcNAc...) asparagine glycosylation is present at N285. H428 contacts Zn(2+). The active site involves E429. H432 provides a ligand contact to Zn(2+). N592 and N621 each carry an N-linked (GlcNAc...) asparagine glycan.

The protein belongs to the peptidase M36 family. Zn(2+) serves as cofactor.

It is found in the secreted. Its function is as follows. Secreted metalloproteinase probably acting as a virulence factor. The chain is Probable extracellular metalloproteinase 5 (MEP5) from Trichophyton verrucosum (strain HKI 0517).